We begin with the raw amino-acid sequence, 379 residues long: Class V chitinase (379 aa).

The first 24 residues, 1-24 (MSSTKLISLIVSITFFLTLQCSMA), serve as a signal peptide directing secretion. Residues 27-369 (VVKASYWFPA…RAASQAWDAT (343 aa)) form the GH18 domain. Gly-99 contacts chitin. Glu-140 serves as the catalytic Proton donor. Tyr-259 is a chitin binding site. Residues Asn-307 and Asn-327 are each glycosylated (N-linked (GlcNAc...) asparagine). Residue Trp-348 participates in chitin binding.

The protein belongs to the glycosyl hydrolase 18 family. Chitinase class V subfamily.

It catalyses the reaction Random endo-hydrolysis of N-acetyl-beta-D-glucosaminide (1-&gt;4)-beta-linkages in chitin and chitodextrins.. The enzyme catalyses Hydrolysis of N,N'-diacetylchitobiose from the non-reducing end of chitin and chitodextrins.. Its pathway is glycan degradation; chitin degradation. Functionally, can hydrolyze glycol chitin and chitin oligosaccharides (e.g. N-acetylglucosamine) (GlcNAc)4, (GlcNAc)5 and (GlcNAc)6. Hydrolyzes N-acetylglucosamine oligomers producing dimers from the non-reducing end of the substrates. The sequence is that of Class V chitinase from Arabidopsis thaliana (Mouse-ear cress).